The following is a 136-amino-acid chain: ATP synthase epsilon chain (136 aa).

The protein belongs to the ATPase epsilon chain family. In terms of assembly, F-type ATPases have 2 components, CF(1) - the catalytic core - and CF(0) - the membrane proton channel. CF(1) has five subunits: alpha(3), beta(3), gamma(1), delta(1), epsilon(1). CF(0) has three main subunits: a, b and c.

It localises to the cell inner membrane. Functionally, produces ATP from ADP in the presence of a proton gradient across the membrane. The sequence is that of ATP synthase epsilon chain from Hydrogenobaculum sp. (strain Y04AAS1).